The primary structure comprises 69 residues: Large ribosomal subunit protein uL29 (69 aa).

It belongs to the universal ribosomal protein uL29 family.

The polypeptide is Large ribosomal subunit protein uL29 (Rhodospirillum centenum (strain ATCC 51521 / SW)).